The chain runs to 238 residues: 2-C-methyl-D-erythritol 4-phosphate cytidylyltransferase (238 aa).

This sequence belongs to the IspD/TarI cytidylyltransferase family. IspD subfamily.

It catalyses the reaction 2-C-methyl-D-erythritol 4-phosphate + CTP + H(+) = 4-CDP-2-C-methyl-D-erythritol + diphosphate. It functions in the pathway isoprenoid biosynthesis; isopentenyl diphosphate biosynthesis via DXP pathway; isopentenyl diphosphate from 1-deoxy-D-xylulose 5-phosphate: step 2/6. Catalyzes the formation of 4-diphosphocytidyl-2-C-methyl-D-erythritol from CTP and 2-C-methyl-D-erythritol 4-phosphate (MEP). In Paraburkholderia phytofirmans (strain DSM 17436 / LMG 22146 / PsJN) (Burkholderia phytofirmans), this protein is 2-C-methyl-D-erythritol 4-phosphate cytidylyltransferase.